The primary structure comprises 485 residues: D-alanine--D-alanyl carrier protein ligase (485 aa).

Thr144–Ser145 is an ATP binding site. Residue Asp189 participates in D-alanine binding. Asn284–Thr289 is a binding site for ATP. Val293 contacts D-alanine. The ATP site is built by Asp365 and Lys473. Lys473 lines the D-alanine pocket.

The protein belongs to the ATP-dependent AMP-binding enzyme family. DltA subfamily.

The protein resides in the cytoplasm. It catalyses the reaction holo-[D-alanyl-carrier protein] + D-alanine + ATP = D-alanyl-[D-alanyl-carrier protein] + AMP + diphosphate. The protein operates within cell wall biogenesis; lipoteichoic acid biosynthesis. Functionally, catalyzes the first step in the D-alanylation of lipoteichoic acid (LTA), the activation of D-alanine and its transfer onto the D-alanyl carrier protein (Dcp) DltC. In an ATP-dependent two-step reaction, forms a high energy D-alanyl-AMP intermediate, followed by transfer of the D-alanyl residue as a thiol ester to the phosphopantheinyl prosthetic group of the Dcp. D-alanylation of LTA plays an important role in modulating the properties of the cell wall in Gram-positive bacteria, influencing the net charge of the cell wall. The polypeptide is D-alanine--D-alanyl carrier protein ligase (Staphylococcus aureus (strain MRSA252)).